A 199-amino-acid polypeptide reads, in one-letter code: Peptidyl-tRNA hydrolase (199 aa).

Tyr-18 contacts tRNA. His-23 acts as the Proton acceptor in catalysis. Tyr-69, Asn-71, and Asn-117 together coordinate tRNA.

It belongs to the PTH family. In terms of assembly, monomer.

The protein resides in the cytoplasm. The catalysed reaction is an N-acyl-L-alpha-aminoacyl-tRNA + H2O = an N-acyl-L-amino acid + a tRNA + H(+). In terms of biological role, hydrolyzes ribosome-free peptidyl-tRNAs (with 1 or more amino acids incorporated), which drop off the ribosome during protein synthesis, or as a result of ribosome stalling. Catalyzes the release of premature peptidyl moieties from peptidyl-tRNA molecules trapped in stalled 50S ribosomal subunits, and thus maintains levels of free tRNAs and 50S ribosomes. This Prochlorococcus marinus (strain MIT 9515) protein is Peptidyl-tRNA hydrolase.